Here is a 236-residue protein sequence, read N- to C-terminus: Probable transmembrane ascorbate ferrireductase 4 (236 aa).

A Cytochrome b561 domain is found at 14 to 210 (FARLSGLVVA…LGCIVITAAI (197 aa)). 3 consecutive transmembrane segments (helical) span residues 17–37 (LSGL…PNLG), 42–62 (TLHP…AILI), and 76–96 (VHLW…WTKF). Positions 44, 77, and 110 each coordinate heme b. 3 helical membrane-spanning segments follow: residues 112-132 (WMGL…FMSF), 144-164 (TFLP…IATA), and 191-211 (VNGL…AAIL). A heme b-binding site is contributed by histidine 149.

In terms of assembly, homodimer. Requires heme b as cofactor.

Its subcellular location is the membrane. The enzyme catalyses Fe(3+)(out) + L-ascorbate(in) = monodehydro-L-ascorbate radical(in) + Fe(2+)(out) + H(+). Its function is as follows. Two-heme-containing cytochrome. May catalyze ascorbate-dependent trans-membrane ferric-chelate reduction. The chain is Probable transmembrane ascorbate ferrireductase 4 (CYB561D) from Arabidopsis thaliana (Mouse-ear cress).